Here is a 179-residue protein sequence, read N- to C-terminus: Large ribosomal subunit protein uL5 (179 aa).

This sequence belongs to the universal ribosomal protein uL5 family. As to quaternary structure, part of the 50S ribosomal subunit; part of the 5S rRNA/L5/L18/L25 subcomplex. Contacts the 5S rRNA and the P site tRNA. Forms a bridge to the 30S subunit in the 70S ribosome.

In terms of biological role, this is one of the proteins that bind and probably mediate the attachment of the 5S RNA into the large ribosomal subunit, where it forms part of the central protuberance. In the 70S ribosome it contacts protein S13 of the 30S subunit (bridge B1b), connecting the 2 subunits; this bridge is implicated in subunit movement. Contacts the P site tRNA; the 5S rRNA and some of its associated proteins might help stabilize positioning of ribosome-bound tRNAs. This is Large ribosomal subunit protein uL5 from Vesicomyosocius okutanii subsp. Calyptogena okutanii (strain HA).